Reading from the N-terminus, the 190-residue chain is GTP cyclohydrolase 1 (190 aa).

Zn(2+)-binding residues include cysteine 75, histidine 78, and cysteine 146.

It belongs to the GTP cyclohydrolase I family. As to quaternary structure, toroid-shaped homodecamer, composed of two pentamers of five dimers.

The catalysed reaction is GTP + H2O = 7,8-dihydroneopterin 3'-triphosphate + formate + H(+). The protein operates within cofactor biosynthesis; 7,8-dihydroneopterin triphosphate biosynthesis; 7,8-dihydroneopterin triphosphate from GTP: step 1/1. In Campylobacter jejuni subsp. doylei (strain ATCC BAA-1458 / RM4099 / 269.97), this protein is GTP cyclohydrolase 1.